The primary structure comprises 502 residues: Galactose/methyl galactoside import ATP-binding protein MglA (502 aa).

ABC transporter domains are found at residues leucine 10 to glutamate 245 and asparagine 255 to leucine 502. Glycine 42–serine 49 contributes to the ATP binding site.

Belongs to the ABC transporter superfamily. Galactose/methyl galactoside importer (TC 3.A.1.2.3) family. The complex is composed of one ATP-binding protein (MglA), two transmembrane proteins (MglC) and a solute-binding protein (MglB).

It localises to the cell inner membrane. The enzyme catalyses D-galactose(out) + ATP + H2O = D-galactose(in) + ADP + phosphate + H(+). It catalyses the reaction methyl beta-D-galactoside(out) + ATP + H2O = methyl beta-D-galactoside(in) + ADP + phosphate + H(+). In terms of biological role, part of the ABC transporter complex MglABC involved in galactose/methyl galactoside import. Responsible for energy coupling to the transport system. The sequence is that of Galactose/methyl galactoside import ATP-binding protein MglA from Vibrio vulnificus (strain CMCP6).